The sequence spans 624 residues: Acidic juvenile hormone-suppressible protein 1 (624 aa).

Positions 1-18 are cleaved as a signal peptide; sequence MARLVLCALALLVAGGLA. N-linked (GlcNAc...) asparagine glycosylation is found at N75 and N478.

It belongs to the hemocyanin family.

It localises to the secreted. It is found in the extracellular space. The chain is Acidic juvenile hormone-suppressible protein 1 (AJSP-1) from Trichoplusia ni (Cabbage looper).